The following is a 360-amino-acid chain: Mitogen-activated protein kinase 1 (360 aa).

N-acetylalanine is present on Ala-2. The Protein kinase domain occupies 25-313; sequence YTNLSYIGEG…VEQALAHPYL (289 aa). At Ser-29 the chain carries Phosphoserine; by SGK1. ATP-binding positions include 31–39 and Lys-54; that span reads IGEGAYGMV. Asp-149 functions as the Proton acceptor in the catalytic mechanism. A Phosphothreonine; by MAP2K1 and MAP2K2 modification is found at Thr-185. The short motif at 185–187 is the TXY element; that stretch reads TEY. Tyr-187 is subject to Phosphotyrosine; by MAP2K1 and MAP2K2. Thr-190 is modified (phosphothreonine; by autocatalysis). Ser-246 and Ser-248 each carry phosphoserine. Residues 259 to 277 mediate DNA binding; sequence KARNYLLSLPHKNKVPWNR. Position 284 is a phosphoserine (Ser-284). The Cytoplasmic retention motif signature appears at 318–322; that stretch reads DPSDE. Residues 327–333 carry the Nuclear translocation motif motif; the sequence is APFKFDM.

The protein belongs to the protein kinase superfamily. CMGC Ser/Thr protein kinase family. MAP kinase subfamily. In terms of assembly, binds both upstream activators and downstream substrates in multimolecular complexes. This interaction inhibits its tyrosine-kinase activity. Interacts with ADAM15, ARHGEF2, ARRB2, DAPK1 (via death domain), HSF4, IER3, IPO7, NISCH, SGK1, and isoform 1 of NEK2. Interacts (via phosphorylated form) with TPR (via C-terminal region and phosphorylated form); the interaction requires dimerization of MAPK1/ERK2 and increases following EGF stimulation. Interacts with MAP2K1. Interacts with DUSP6. Interacts (phosphorylated form) with CAV2 ('Tyr-19'-phosphorylated form); the interaction, promoted by insulin, leads to nuclear location and MAPK1 activation. Interacts with MORG1, PEA15 and MKNK2. MKNK2 isoform 1 binding prevents from dephosphorylation and inactivation. Interacts with DCC. The phosphorylated form interacts with PML (isoform PML-4). Interacts with STYX. Interacts with CDK2AP2. Interacts with CAVIN4. Interacts with DUSP7; the interaction enhances DUSP7 phosphatase activity. Interacts with GIT1; this interaction is necessary for MAPK1 localization to focal adhesions. Interacts with ZNF263. Interacts with phosphoglycerate kinase PGK1; the interaction is direct, occurs under hypoxic conditions, and promotes interaction between PGK1 and PIN1. As to quaternary structure, (Microbial infection) Interacts with HIV-1 Nef through its SH3 domain. Mg(2+) is required as a cofactor. Phosphorylated upon KIT and FLT3 signaling. Dually phosphorylated on Thr-185 and Tyr-187, which activates the enzyme. Undergoes regulatory phosphorylation on additional residues such as Ser-246 and Ser-248 in the kinase insert domain (KID) These phosphorylations, which are probably mediated by more than one kinase, are important for binding of MAPK1/ERK2 to importin-7 (IPO7) and its nuclear translocation. In addition, autophosphorylation of Thr-190 was shown to affect the subcellular localization of MAPK1/ERK2 as well. Ligand-activated ALK induces tyrosine phosphorylation. Dephosphorylated by PTPRJ at Tyr-187. Phosphorylation on Ser-29 by SGK1 results in its activation by enhancing its interaction with MAP2K1/MEK1 and MAP2K2/MEK2. DUSP3 and DUSP6 dephosphorylate specifically MAPK1/ERK2 and MAPK3/ERK1 whereas DUSP9 dephosphorylates a broader range of MAPKs. Dephosphorylated by DUSP1 and DUSP2 at Thr-185 and Tyr-187. Post-translationally, ISGylated. In terms of processing, ubiquitinated by TRIM15 via 'Lys-63'-linked ubiquitination; leading to activation. Deubiquitinated by CYLD.

It localises to the cytoplasm. The protein resides in the cytoskeleton. It is found in the spindle. The protein localises to the nucleus. Its subcellular location is the microtubule organizing center. It localises to the centrosome. The protein resides in the membrane. It is found in the caveola. The protein localises to the cell junction. Its subcellular location is the focal adhesion. The enzyme catalyses L-seryl-[protein] + ATP = O-phospho-L-seryl-[protein] + ADP + H(+). The catalysed reaction is L-threonyl-[protein] + ATP = O-phospho-L-threonyl-[protein] + ADP + H(+). With respect to regulation, phosphorylated by MAP2K1/MEK1 and MAP2K2/MEK2 on Thr-185 and Tyr-187 in response to external stimuli like insulin or NGF. Both phosphorylations are required for activity. This phosphorylation causes dramatic conformational changes, which enable full activation and interaction of MAPK1/ERK2 with its substrates. Phosphorylation on Ser-29 by SGK1 results in its activation by enhancing its interaction with MAP2K1/MEK1 and MAP2K2/MEK2. Dephosphorylated and inactivated by DUSP1, DUSP3, DUSP6 and DUSP9. Inactivated by pyrimidylpyrrole inhibitors. In terms of biological role, serine/threonine kinase which acts as an essential component of the MAP kinase signal transduction pathway. MAPK1/ERK2 and MAPK3/ERK1 are the 2 MAPKs which play an important role in the MAPK/ERK cascade. They participate also in a signaling cascade initiated by activated KIT and KITLG/SCF. Depending on the cellular context, the MAPK/ERK cascade mediates diverse biological functions such as cell growth, adhesion, survival and differentiation through the regulation of transcription, translation, cytoskeletal rearrangements. The MAPK/ERK cascade also plays a role in initiation and regulation of meiosis, mitosis, and postmitotic functions in differentiated cells by phosphorylating a number of transcription factors. About 160 substrates have already been discovered for ERKs. Many of these substrates are localized in the nucleus, and seem to participate in the regulation of transcription upon stimulation. However, other substrates are found in the cytosol as well as in other cellular organelles, and those are responsible for processes such as translation, mitosis and apoptosis. Moreover, the MAPK/ERK cascade is also involved in the regulation of the endosomal dynamics, including lysosome processing and endosome cycling through the perinuclear recycling compartment (PNRC); as well as in the fragmentation of the Golgi apparatus during mitosis. The substrates include transcription factors (such as ATF2, BCL6, ELK1, ERF, FOS, HSF4 or SPZ1), cytoskeletal elements (such as CANX, CTTN, GJA1, MAP2, MAPT, PXN, SORBS3 or STMN1), regulators of apoptosis (such as BAD, BTG2, CASP9, DAPK1, IER3, MCL1 or PPARG), regulators of translation (such as EIF4EBP1 and FXR1) and a variety of other signaling-related molecules (like ARHGEF2, DCC, FRS2 or GRB10). Protein kinases (such as RAF1, RPS6KA1/RSK1, RPS6KA3/RSK2, RPS6KA2/RSK3, RPS6KA6/RSK4, SYK, MKNK1/MNK1, MKNK2/MNK2, RPS6KA5/MSK1, RPS6KA4/MSK2, MAPKAPK3 or MAPKAPK5) and phosphatases (such as DUSP1, DUSP4, DUSP6 or DUSP16) are other substrates which enable the propagation the MAPK/ERK signal to additional cytosolic and nuclear targets, thereby extending the specificity of the cascade. Mediates phosphorylation of TPR in response to EGF stimulation. May play a role in the spindle assembly checkpoint. Phosphorylates PML and promotes its interaction with PIN1, leading to PML degradation. Phosphorylates CDK2AP2. Phosphorylates phosphoglycerate kinase PGK1 under hypoxic conditions to promote its targeting to the mitochondrion and suppress the formation of acetyl-coenzyme A from pyruvate. Functionally, acts as a transcriptional repressor. Binds to a [GC]AAA[GC] consensus sequence. Repress the expression of interferon gamma-induced genes. Seems to bind to the promoter of CCL5, DMP1, IFIH1, IFITM1, IRF7, IRF9, LAMP3, OAS1, OAS2, OAS3 and STAT1. Transcriptional activity is independent of kinase activity. The polypeptide is Mitogen-activated protein kinase 1 (Homo sapiens (Human)).